Here is a 310-residue protein sequence, read N- to C-terminus: Protein N-terminal asparagine amidohydrolase (310 aa).

As to quaternary structure, monomer.

The protein resides in the cytoplasm. The enzyme catalyses N-terminal L-asparaginyl-[protein] + H2O + H(+) = N-terminal L-aspartyl-[protein] + NH4(+). In terms of biological role, N-terminal asparagine deamidase that mediates deamidation of N-terminal asparagine residues to aspartate. Required for the ubiquitin-dependent turnover of intracellular proteins that initiate with Met-Asn. These proteins are acetylated on the retained initiator methionine and can subsequently be modified by the removal of N-acetyl methionine by acylaminoacid hydrolase (AAH). Conversion of the resulting N-terminal asparagine to aspartate by NTAN1/PNAD renders the protein susceptible to arginylation, polyubiquitination and degradation as specified by the N-end rule. This enzyme does not act on substrates with internal or C-terminal asparagines and does not act on glutamine residues in any position. In Mus musculus (Mouse), this protein is Protein N-terminal asparagine amidohydrolase.